A 458-amino-acid chain; its full sequence is tRNA modification GTPase MnmE (458 aa).

Residues arginine 26, glutamate 88, and arginine 127 each coordinate (6S)-5-formyl-5,6,7,8-tetrahydrofolate. In terms of domain architecture, TrmE-type G spans 224 to 378 (GLSTAIIGRP…IEDRINQLFF (155 aa)). Asparagine 234 provides a ligand contact to K(+). GTP-binding positions include 234–239 (NVGKSS), 253–259 (TDIAGTT), and 278–281 (DTAG). Mg(2+) is bound at residue serine 238. Residues threonine 253, isoleucine 255, and threonine 258 each contribute to the K(+) site. Threonine 259 is a Mg(2+) binding site. Lysine 458 serves as a coordination point for (6S)-5-formyl-5,6,7,8-tetrahydrofolate.

It belongs to the TRAFAC class TrmE-Era-EngA-EngB-Septin-like GTPase superfamily. TrmE GTPase family. Homodimer. Heterotetramer of two MnmE and two MnmG subunits. It depends on K(+) as a cofactor.

The protein localises to the cytoplasm. Exhibits a very high intrinsic GTPase hydrolysis rate. Involved in the addition of a carboxymethylaminomethyl (cmnm) group at the wobble position (U34) of certain tRNAs, forming tRNA-cmnm(5)s(2)U34. The sequence is that of tRNA modification GTPase MnmE from Streptococcus pyogenes serotype M3 (strain ATCC BAA-595 / MGAS315).